Reading from the N-terminus, the 239-residue chain is DNA repair protein RecO (239 aa).

The protein belongs to the RecO family.

Its function is as follows. Involved in DNA repair and RecF pathway recombination. This Stenotrophomonas maltophilia (strain R551-3) protein is DNA repair protein RecO.